Reading from the N-terminus, the 312-residue chain is Glyoxylate/hydroxypyruvate reductase A (312 aa).

Arginine 227 is a catalytic residue. The active-site Proton donor is histidine 275.

This sequence belongs to the D-isomer specific 2-hydroxyacid dehydrogenase family. GhrA subfamily.

Its subcellular location is the cytoplasm. It catalyses the reaction glycolate + NADP(+) = glyoxylate + NADPH + H(+). The enzyme catalyses (R)-glycerate + NAD(+) = 3-hydroxypyruvate + NADH + H(+). The catalysed reaction is (R)-glycerate + NADP(+) = 3-hydroxypyruvate + NADPH + H(+). Catalyzes the NADPH-dependent reduction of glyoxylate and hydroxypyruvate into glycolate and glycerate, respectively. This Citrobacter koseri (strain ATCC BAA-895 / CDC 4225-83 / SGSC4696) protein is Glyoxylate/hydroxypyruvate reductase A.